Here is a 265-residue protein sequence, read N- to C-terminus: Ubiquinone biosynthesis protein COQ4 homolog, mitochondrial (265 aa).

His162, Asp163, His166, and Glu178 together coordinate Zn(2+).

Belongs to the COQ4 family. As to quaternary structure, component of a multi-subunit COQ enzyme complex. The cofactor is Zn(2+).

It localises to the mitochondrion inner membrane. The catalysed reaction is a 4-hydroxy-3-methoxy-5-(all-trans-polyprenyl)benzoate + H(+) = a 2-methoxy-6-(all-trans-polyprenyl)phenol + CO2. It participates in cofactor biosynthesis; ubiquinone biosynthesis. In terms of biological role, lyase that catalyzes the C1-decarboxylation of 4-hydroxy-3-methoxy-5-(all-trans-polyprenyl)benzoic acid into 2-methoxy-6-(all-trans-polyprenyl)phenol during ubiquinone biosynthesis. The polypeptide is Ubiquinone biosynthesis protein COQ4 homolog, mitochondrial (Drosophila willistoni (Fruit fly)).